The following is a 412-amino-acid chain: tRNA (guanine-N(7)-)-methyltransferase non-catalytic subunit WDR4 (412 aa).

Alanine 2 carries the N-acetylalanine modification. 7 WD repeats span residues 3 to 40, 50 to 90, 94 to 131, 137 to 174, 180 to 218, 230 to 273, and 319 to 373; these read GSVGLALCGQTLVVRGGSRFLATSIASSDDDSLFIYDC, NKGE…LFRT, QCLSVRTVARRCTALTFIASEEKVLVADKSGDVYSFSV, CGRLELGHLSMLLDVAVSPDDRFILTADRDEKIRVSWA, IESFCLGHTEFVSRISVVPTQPGLLLSSSGDGTLRLWEY, ASLQ…IFQL, and PVGD…SYLK. The tract at residues 377–412 is disordered; sequence ERLQQQLEKKQRRRSPPPGPDGHAKKMRPGEATLSC. 2 positions are modified to phosphoserine: serine 391 and serine 411.

This sequence belongs to the WD repeat TRM82 family. In terms of assembly, non-catalytic component of the METTL1-WDR4 complex, composed of METTL1 and WDR4. Interacts with FEN1; the interaction is direct.

The protein resides in the nucleus. Its subcellular location is the chromosome. Its pathway is tRNA modification; N(7)-methylguanine-tRNA biosynthesis. Its function is as follows. Non-catalytic component of the METTL1-WDR4 methyltransferase complex required for the formation of N(7)-methylguanine in a subset of RNA species, such as tRNAs, mRNAs and microRNAs (miRNAs). In the METTL1-WDR4 methyltransferase complex, WDR4 acts as a scaffold for tRNA-binding. Required for the formation of N(7)-methylguanine at position 46 (m7G46) in a large subset of tRNAs that contain the 5'-RAGGU-3' motif within the variable loop. M7G46 interacts with C13-G22 in the D-loop to stabilize tRNA tertiary structure and protect tRNAs from decay. Also required for the formation of N(7)-methylguanine at internal sites in a subset of mRNAs. Also required for methylation of a specific subset of miRNAs, such as let-7. Independently of METTL1, also plays a role in genome stability: localizes at the DNA replication site and regulates endonucleolytic activities of FEN1. This Homo sapiens (Human) protein is tRNA (guanine-N(7)-)-methyltransferase non-catalytic subunit WDR4.